The sequence spans 323 residues: Putative gluconeogenesis factor (323 aa).

The protein belongs to the gluconeogenesis factor family.

Its subcellular location is the cytoplasm. Its function is as follows. Required for morphogenesis under gluconeogenic growth conditions. This chain is Putative gluconeogenesis factor, found in Thermoanaerobacterium thermosulfurigenes (Clostridium thermosulfurogenes).